We begin with the raw amino-acid sequence, 435 residues long: Cyclic GMP-AMP synthase-like receptor (435 aa).

ATP contacts are provided by residues Ser70 and Glu82–Asp84. Residues Glu82, Asp84, and Asp209 each coordinate Mg(2+). Asp209 provides a ligand contact to GTP. Residues Lys286 and Ser300–Lys304 each bind ATP. Mn(2+)-binding residues include Leu311, Asp312, and Asp317.

It belongs to the mab-21 family. The cofactor is Mg(2+). Mn(2+) serves as cofactor.

It carries out the reaction GTP + ATP = 2',3'-cGAMP + 2 diphosphate. It catalyses the reaction GTP + ATP = pppGp(2'-5')A + diphosphate. The catalysed reaction is pppGp(2'-5')A = 2',3'-cGAMP + diphosphate. In terms of biological role, nucleotidyltransferase that catalyzes the formation of cyclic GMP-AMP (2',3'-cGAMP) from ATP and GTP and plays a key role in innate immunity. Directly binds some unknown ligand, activating the nucleotidyltransferase activity, leading to synthesis of 2',3'-cGAMP, a second messenger that binds to and activates Sting, thereby triggering the immune response via activation of the NF-kappa-B transcription factor. The polypeptide is Cyclic GMP-AMP synthase-like receptor (Ctenocephalides felis (Cat flea)).